The chain runs to 1461 residues: Pleiotropic drug resistance protein 2 (1461 aa).

The ABC transporter 1 domain maps to 172–445; the sequence is LGLIHLSPSK…FEYMGFRCPE (274 aa). 205 to 212 lines the ATP pocket; it reads GPPGSGKT. The 214-residue stretch at 523–736 folds into the ABC transmembrane type-2 1 domain; it reads ELFKSCFTRE…GQNAIAINEF (214 aa). Transmembrane regions (helical) follow at residues 541-561, 577-597, 622-642, 660-680, 685-705, and 771-791; these read FLYI…LTVF, FWGA…QELA, LPIW…WIIL, LLAF…IAAA, VVAN…GGFI, and ISIG…IAAL. The region spanning 859 to 1111 is the ABC transporter 2 domain; it reads LAFNHVNYYV…KLVEYFETIP (253 aa). 904 to 911 contributes to the ATP binding site; sequence GVSGAGKT. The ABC transmembrane type-2 2 domain maps to 1184–1398; that stretch reads TQCKACFWKQ…TIYGIFASQV (215 aa). Transmembrane regions (helical) follow at residues 1203 to 1223, 1243 to 1263, 1291 to 1311, 1321 to 1341, 1348 to 1368, 1379 to 1399, and 1430 to 1450; these read YNAI…VIFW, YAAV…VVAI, TIYV…MIGY, FYYF…MVVA, IAAI…GFLI, WYYW…SQVG, and FLLV…FVFA.

Belongs to the ABC transporter superfamily. ABCG family. PDR (TC 3.A.1.205) subfamily.

The protein resides in the membrane. In terms of biological role, may be a general defense protein. This chain is Pleiotropic drug resistance protein 2 (PDR2), found in Nicotiana plumbaginifolia (Leadwort-leaved tobacco).